The chain runs to 151 residues: UPF0208 membrane protein NT01EI_2692 (151 aa).

The next 2 membrane-spanning stretches (helical) occupy residues 46 to 65 and 69 to 91; these read FAIRFMPPIAMFTLCWQIAL and LGPAIATALFACSLPMQGLWWLG.

This sequence belongs to the UPF0208 family.

It is found in the cell inner membrane. This Edwardsiella ictaluri (strain 93-146) protein is UPF0208 membrane protein NT01EI_2692.